A 753-amino-acid chain; its full sequence is Protein transport protein SEC23-1 (753 aa).

Zn(2+)-binding residues include Cys56, Cys61, Cys80, and Cys83.

The protein belongs to the SEC23/SEC24 family. SEC23 subfamily. As to quaternary structure, the COPII coat is composed of at least 5 proteins: the SEC23/24 complex, the SEC13/31 complex, and the protein SAR1.

The protein resides in the cytoplasm. It localises to the cytoplasmic vesicle. It is found in the COPII-coated vesicle membrane. Its subcellular location is the endoplasmic reticulum membrane. The protein localises to the golgi apparatus membrane. In terms of biological role, component of the coat protein complex II (COPII) which promotes the formation of transport vesicles from the endoplasmic reticulum (ER). The coat has two main functions, the physical deformation of the endoplasmic reticulum membrane into vesicles and the selection of cargo molecules. This chain is Protein transport protein SEC23-1 (SEC231), found in Candida glabrata (strain ATCC 2001 / BCRC 20586 / JCM 3761 / NBRC 0622 / NRRL Y-65 / CBS 138) (Yeast).